Here is a 347-residue protein sequence, read N- to C-terminus: Guanine nucleotide-binding protein subunit beta (347 aa).

7 WD repeats span residues 60–90, 102–132, 148–177, 189–219, 231–261, 275–305, and 317–347; these read GHLAKIYAMHWAEDNVHLVSASQDGKLLVWD, LRSSWVMTCAYSPTANFVACGGLDNICSIYN, SHTGYLSCCRFLNDRQIVTSSGDMTCILWD, DHNGDVMSVSVSPDKNYFISGACDATAKLWD, GHEADINAVQYFPNGLSFGTGSDDASCRLFD, NILCGITSVGFSFSGRFLFAGYDDFTCNVWD, and GHGNRVSCLGVPTDGMALCTGSWDSLLKIWA.

The protein belongs to the WD repeat G protein beta family. In terms of assembly, g proteins are composed of 3 units, alpha, beta and gamma. Interacts with gpgA, and this requires phlp1.

The protein localises to the cytoplasm. It localises to the cell membrane. Its function is as follows. Guanine nucleotide-binding proteins (G proteins) are involved as a modulator or transducer in various transmembrane signaling systems. The beta and gamma chains are required for the GTPase activity, for replacement of GDP by GTP, and for G protein-effector interaction. Required for normal chemotaxis in response to cAMP and for aggregation during scorocarp development. This chain is Guanine nucleotide-binding protein subunit beta (gpbA), found in Dictyostelium discoideum (Social amoeba).